The sequence spans 59 residues: Large ribosomal subunit protein bL32c (59 aa).

The interval 1 to 20 is disordered; the sequence is MAVPKKRTSKSKKRIRKSVW.

The protein belongs to the bacterial ribosomal protein bL32 family.

Its subcellular location is the plastid. It is found in the chloroplast. In Angiopteris evecta (Mule's foot fern), this protein is Large ribosomal subunit protein bL32c.